A 461-amino-acid polypeptide reads, in one-letter code: BSD domain-containing protein 1 (461 aa).

2 positions are modified to phosphoserine: Ser123 and Ser197. A BSD domain is found at 177–229 (WLSQFCLEEKKGEISELLVGSPSIRALYTKMVPAAVSHSEFWHRYFYKVHQLE). The segment at 239–384 (KQRAEQSISE…SGPEPRPPAR (146 aa)) is disordered. The segment covering 250–259 (PGWEEEEEEL) has biased composition (acidic residues). The span at 295–318 (LVTPVEPPTEVTPSESSESVSLVT) shows a compositional bias: low complexity. A Phosphothreonine modification is found at Thr387. Positions 398–430 (VFELNSDSGKSTPSNNGKKGSSTDISEDWEKDF) are disordered. Polar residues predominate over residues 402–421 (NSDSGKSTPSNNGKKGSSTD). A phosphoserine mark is found at Ser418, Ser419, and Ser449.

The polypeptide is BSD domain-containing protein 1 (BSDC1) (Bos taurus (Bovine)).